The sequence spans 431 residues: Gamma-glutamyl phosphate reductase (431 aa).

This sequence belongs to the gamma-glutamyl phosphate reductase family.

It localises to the cytoplasm. It carries out the reaction L-glutamate 5-semialdehyde + phosphate + NADP(+) = L-glutamyl 5-phosphate + NADPH + H(+). The protein operates within amino-acid biosynthesis; L-proline biosynthesis; L-glutamate 5-semialdehyde from L-glutamate: step 2/2. In terms of biological role, catalyzes the NADPH-dependent reduction of L-glutamate 5-phosphate into L-glutamate 5-semialdehyde and phosphate. The product spontaneously undergoes cyclization to form 1-pyrroline-5-carboxylate. This is Gamma-glutamyl phosphate reductase from Synechococcus elongatus (strain ATCC 33912 / PCC 7942 / FACHB-805) (Anacystis nidulans R2).